The sequence spans 445 residues: Elongation factor 1-alpha (445 aa).

The tr-type G domain maps to 5 to 230 (KVHISLVVIG…DNLEPPKRPS (226 aa)). Positions 14 to 21 (GHVDSGKS) are G1. A GTP-binding site is contributed by 14–21 (GHVDSGKS). Lys-55 is modified (N6,N6-dimethyllysine). Residues 70-74 (CITID) are G2. Lys-79 is modified (N6,N6,N6-trimethyllysine). The segment at 91–94 (DAPG) is G3. GTP-binding positions include 91–95 (DAPGH) and 153–156 (NKFD). Residues 153–156 (NKFD) form a G4 region. Residue Lys-187 is modified to N6,N6,N6-trimethyllysine. A G5 region spans residues 194–196 (SGW). Lys-261 carries the N6-methyllysine modification. An N6,N6,N6-trimethyllysine mark is found at Lys-306 and Lys-396.

It belongs to the TRAFAC class translation factor GTPase superfamily. Classic translation factor GTPase family. EF-Tu/EF-1A subfamily.

The protein resides in the cytoplasm. Its function is as follows. This protein promotes the GTP-dependent binding of aminoacyl-tRNA to the A-site of ribosomes during protein biosynthesis. The protein is Elongation factor 1-alpha (TEF) of Euglena gracilis.